We begin with the raw amino-acid sequence, 293 residues long: Bifunctional protein FolD (293 aa).

NADP(+) contacts are provided by residues 166 to 168 (GRS), serine 191, and isoleucine 232.

The protein belongs to the tetrahydrofolate dehydrogenase/cyclohydrolase family. Homodimer.

The enzyme catalyses (6R)-5,10-methylene-5,6,7,8-tetrahydrofolate + NADP(+) = (6R)-5,10-methenyltetrahydrofolate + NADPH. The catalysed reaction is (6R)-5,10-methenyltetrahydrofolate + H2O = (6R)-10-formyltetrahydrofolate + H(+). It participates in one-carbon metabolism; tetrahydrofolate interconversion. In terms of biological role, catalyzes the oxidation of 5,10-methylenetetrahydrofolate to 5,10-methenyltetrahydrofolate and then the hydrolysis of 5,10-methenyltetrahydrofolate to 10-formyltetrahydrofolate. This is Bifunctional protein FolD from Synechococcus sp. (strain JA-2-3B'a(2-13)) (Cyanobacteria bacterium Yellowstone B-Prime).